The chain runs to 621 residues: Chaperone protein HscA homolog (621 aa).

The protein belongs to the heat shock protein 70 family.

Chaperone involved in the maturation of iron-sulfur cluster-containing proteins. Has a low intrinsic ATPase activity which is markedly stimulated by HscB. This Polynucleobacter necessarius subsp. necessarius (strain STIR1) protein is Chaperone protein HscA homolog.